Consider the following 61-residue polypeptide: UPF0337 protein LMOf2365_2190 (61 aa).

The tract at residues 1–61 is disordered; it reads MSEDKGMKDK…TGDAKKKLSE (61 aa).

It belongs to the UPF0337 (CsbD) family.

The sequence is that of UPF0337 protein LMOf2365_2190 from Listeria monocytogenes serotype 4b (strain F2365).